The chain runs to 747 residues: DNA-directed RNA polymerase subunit beta' (747 aa).

Zn(2+) contacts are provided by Cys-70, Cys-72, Cys-97, and Cys-100. Asp-502, Asp-504, and Asp-506 together coordinate Mg(2+).

It belongs to the RNA polymerase beta' chain family. RpoC1 subfamily. In plastids the minimal PEP RNA polymerase catalytic core is composed of four subunits: alpha, beta, beta', and beta''. When a (nuclear-encoded) sigma factor is associated with the core the holoenzyme is formed, which can initiate transcription. Mg(2+) is required as a cofactor. It depends on Zn(2+) as a cofactor.

The protein resides in the plastid. The protein localises to the chloroplast. The catalysed reaction is RNA(n) + a ribonucleoside 5'-triphosphate = RNA(n+1) + diphosphate. DNA-dependent RNA polymerase catalyzes the transcription of DNA into RNA using the four ribonucleoside triphosphates as substrates. The polypeptide is DNA-directed RNA polymerase subunit beta' (Gnetum parvifolium (Small-leaved jointfir)).